The primary structure comprises 86 residues: U15-lycotoxin-Ls1d (86 aa).

Residues 1 to 20 form the signal peptide; sequence MNSKIFAVLLLLGLLSCVLS. The WAP domain maps to 21–66; sequence DQYCPKSSITACKKMNIRNDCCKDDDCTGGSWCCATPCGNFCKYPT. Cystine bridges form between C24–C54, C32–C58, C41–C53, C42–C80, and C47–C62.

The protein belongs to the venom protein 11 family. 01 (wap-1) subfamily. Contains 5 disulfide bonds. Expressed by the venom gland.

The protein resides in the secreted. In terms of biological role, has antibacterial activity. The protein is U15-lycotoxin-Ls1d of Lycosa singoriensis (Wolf spider).